A 385-amino-acid polypeptide reads, in one-letter code: S-adenosylmethionine synthase (385 aa).

His-16 serves as a coordination point for ATP. Asp-18 contributes to the Mg(2+) binding site. Glu-44 provides a ligand contact to K(+). Glu-57 and Gln-100 together coordinate L-methionine. The interval Gln-100–Arg-110 is flexible loop. Residues Asp-164–Lys-166, Lys-230–Phe-231, Asp-239, Arg-245–Lys-246, Ala-262, and Lys-266 contribute to the ATP site. Asp-239 lines the L-methionine pocket. Lys-270 provides a ligand contact to L-methionine.

This sequence belongs to the AdoMet synthase family. Homotetramer; dimer of dimers. The cofactor is Mg(2+). It depends on K(+) as a cofactor.

The protein localises to the cytoplasm. It catalyses the reaction L-methionine + ATP + H2O = S-adenosyl-L-methionine + phosphate + diphosphate. The protein operates within amino-acid biosynthesis; S-adenosyl-L-methionine biosynthesis; S-adenosyl-L-methionine from L-methionine: step 1/1. Catalyzes the formation of S-adenosylmethionine (AdoMet) from methionine and ATP. The overall synthetic reaction is composed of two sequential steps, AdoMet formation and the subsequent tripolyphosphate hydrolysis which occurs prior to release of AdoMet from the enzyme. This chain is S-adenosylmethionine synthase, found in Helicobacter pylori (strain Shi470).